The sequence spans 83 residues: Sulfur carrier protein TusA (83 aa).

The active-site Cysteine persulfide intermediate is the Cys-19.

Belongs to the sulfur carrier protein TusA family.

The protein localises to the cytoplasm. Its function is as follows. Sulfur carrier protein which probably makes part of a sulfur-relay system. The sequence is that of Sulfur carrier protein TusA from Aliivibrio fischeri (strain ATCC 700601 / ES114) (Vibrio fischeri).